Consider the following 2176-residue polypeptide: Nipped-B-like protein scc-2 (2176 aa).

A compositionally biased stretch (polar residues) spans 1–25 (MDPNNLQNSLNGTGNPNFQPVQTNA). Disordered stretches follow at residues 1-27 (MDPN…NAGG), 150-170 (PIPQ…QIQS), 464-483 (SEAT…DEEG), 495-514 (MMSV…NQRK), 523-551 (YDSL…DDED), 585-615 (QHFF…IESR), and 669-708 (DSLD…EMDE). Low complexity predominate over residues 464-473 (SEATQSSSVT). Basic and acidic residues-rich tracts occupy residues 597 to 615 (EDRI…IESR) and 685 to 695 (SGGDHHHKGDE). Residues 696–708 (NSDESDEEEEMDE) show a composition bias toward acidic residues. HEAT repeat units lie at residues 1280–1312 (DTYL…IIEA), 1320–1351 (EDVQ…FVLY), 1353–1388 (EEYV…ICEK), 1393–1426 (EMIP…LWFQ), 1692–1723 (EKVF…FCAQ), 1803–1834 (QKYW…TLNQ), and 1840–1871 (GASI…IDSK). The disordered stretch occupies residues 2149–2176 (ITAANDDYDEEEDGGEDSRGPIMEQMEH). Positions 2154–2163 (DDYDEEEDGG) are enriched in acidic residues.

The protein belongs to the SCC2/Nipped-B family. As to quaternary structure, may heterodimerize with mau-2/SCC4 to form the cohesin loading complex.

It is found in the nucleus. Its subcellular location is the chromosome. In terms of biological role, plays an important role in the loading of the cohesin complex on to meiotic chromosomes. Forms a heterodimeric complex (also known as cohesin loading complex) with mau-2/SCC4 which mediates the loading of the cohesin complex onto chromatin. Plays an essential role in cell division during embryonic development. Promotes normal chromosome organization during meiosis. Required for the assembly of the synaptonemal complex between homologous chromosomes to promote sister chromatid cohesion during meiosis. Required for chromosome segregation during mitosis and meiosis. Plays a role in DNA double-strand break (DSB) repair during meiotic recombination and promotes the assembly of the 9-1-1 cell-cycle checkpoint response complex which is required for inducing apoptosis in response to DNA damage, at DNA damage sites. The polypeptide is Nipped-B-like protein scc-2 (Caenorhabditis elegans).